Reading from the N-terminus, the 1108-residue chain is Retinal guanylyl cyclase 2 (1108 aa).

The first 50 residues, 1–50 (MFLGPWPFSRLLSWFAISSRLSGQHGLPSSKFLRCLCLLALLPLLRWGQA), serve as a signal peptide directing secretion. At 51–469 (LPYKIGVIGP…CQGGIDPALA (419 aa)) the chain is on the extracellular side. A disulfide bond links C104 and C132. Residues 470–490 (MMVCFALLIALLSINGFAYFI) form a helical membrane-spanning segment. The Cytoplasmic segment spans residues 491–1108 (RRRINKIQLI…AERQLVRNKP (618 aa)). Residues 532 to 812 (FQIISEVQSG…DEIFNQFKTF (281 aa)) enclose the Protein kinase domain. The region spanning 884 to 1014 (TLYFSDIVGF…DTVNTASRME (131 aa)) is the Guanylate cyclase domain.

Belongs to the adenylyl cyclase class-4/guanylyl cyclase family. As to quaternary structure, homodimer. Interacts with RD3; promotes the exit of GUCY2F from the endoplasmic reticulum and its trafficking to the photoreceptor outer segments. Post-translationally, there are 9 conserved cysteine residues in sensory guanylate cyclases, 6 in the extracellular domain, which may be involved in intra- or interchain disulfide bonds. In terms of tissue distribution, retina.

The protein resides in the membrane. It is found in the photoreceptor outer segment membrane. The catalysed reaction is GTP = 3',5'-cyclic GMP + diphosphate. Its activity is regulated as follows. Activated by GUCA1B when free calcium ions concentration is low, and inhibited by GUCA1B when free calcium ions concentration is high. Inhibited by RD3. In terms of biological role, responsible for the synthesis of cyclic GMP (cGMP) in rods and cones of photoreceptors. Plays an essential role in phototransduction, by mediating cGMP replenishment. May also participate in the trafficking of membrane-asociated proteins to the photoreceptor outer segment membrane. This chain is Retinal guanylyl cyclase 2, found in Mus musculus (Mouse).